Reading from the N-terminus, the 426-residue chain is SrfA-induced gene K protein (426 aa).

Residues 1–23 form the signal peptide; that stretch reads MKKMKILSFFILSLAIIIGIVYS. Residues asparagine 64, asparagine 136, asparagine 160, and asparagine 226 are each glycosylated (N-linked (GlcNAc...) asparagine). Laminin EGF-like domains lie at 325–348 and 384–408; these read DNQC…GMVL and CNGT…GGEV. 3 disulfides stabilise this stretch: cysteine 330–cysteine 339, cysteine 342–cysteine 358, and cysteine 370–cysteine 388. An N-linked (GlcNAc...) asparagine glycan is attached at asparagine 385.

The protein is SrfA-induced gene K protein (sigK) of Dictyostelium discoideum (Social amoeba).